Consider the following 470-residue polypeptide: Aminoacyl transferase sphA (470 aa).

Ser-212, His-244, and Thr-272 together coordinate pyridoxal 5'-phosphate. At Lys-275 the chain carries N6-(pyridoxal phosphate)lysine.

It belongs to the class-II pyridoxal-phosphate-dependent aminotransferase family. BioF subfamily. As to quaternary structure, homodimer. The cofactor is pyridoxal 5'-phosphate.

It catalyses the reaction aminomalonate + (3R)-hydroxyoctadeca-4,10-dienoyl-[ACP] = 3-oxopresphingofungin + holo-[ACP] + CO2. It participates in secondary metabolite biosynthesis. Aminoacyl transferase; part of the gene cluster that mediates the biosynthesis of sphingofungins, bioactive molecules acting as sphingolipid inhibitors via inhibiting serine palmitoyl transferase (SPT). Within the pathway, sphA transfers aminomalonate onto the sphB product 3-hydroxyoctadeca-4,10-dienoyl-ACP to produce 3-keto-presphingofungin. The substrate specificity of sphA using only aminomalonate in Aspergillus fumigatus is responsible for the biosynthesis of sphingofungins B and C but not E and F like in Byssochlamys spectabilis. The PKS sphB does not contain any putative thioesterase domain for releasing the nascent polyketide chain and it has been suggested that aminoacyl transferases can facilitate the polyketide chain release. Sphingofungin biosynthesis starts with the PKS sphB that produces an C18 polyketide precursor 3-hydroxyoctadeca-4,10-dienoyl-ACP containing one delta-6 desaturation and one delta-12 desaturation. The aminoacyl transferase sphA uses the sphB product to produce 3-keto-presphingofungin by adding an aminomalonate molecule. SphF then reduces the C-3 ketone of 3-keto-presphingofungin which leads to presphingofungin. The cytochrome P450 monooxygenase sphH converts presphingofungin into sphingofungin B1 which is further converted to sphingofungin B by the dioxygenase sphC. SphC is also able to convert presphingofungin into sphingofungin B2. The acetyltransferase sphE acetylates sphingofungin B to produce sphingofungin C, but can also convert sphingofungin B1 into sphingofungin C1 and sphingofungin B2 into sphingofungin C2. Finally, sphingofungin C can be spontaneously converted into sphingofungin D. This chain is Aminoacyl transferase sphA, found in Aspergillus fumigatus (strain CBS 144.89 / FGSC A1163 / CEA10) (Neosartorya fumigata).